Here is an 834-residue protein sequence, read N- to C-terminus: Glycerol-3-phosphate acyltransferase (834 aa).

Residues 309-314 carry the HXXXXD motif motif; sequence CHRSHI.

It belongs to the GPAT/DAPAT family.

It is found in the cell inner membrane. The catalysed reaction is sn-glycerol 3-phosphate + an acyl-CoA = a 1-acyl-sn-glycero-3-phosphate + CoA. The protein operates within phospholipid metabolism; CDP-diacylglycerol biosynthesis; CDP-diacylglycerol from sn-glycerol 3-phosphate: step 1/3. The sequence is that of Glycerol-3-phosphate acyltransferase from Pseudomonas paraeruginosa (strain DSM 24068 / PA7) (Pseudomonas aeruginosa (strain PA7)).